An 848-amino-acid polypeptide reads, in one-letter code: ATP-dependent Clp protease ATP-binding subunit ClpC1 (848 aa).

Residues 2 to 144 (FERFTDRARK…RQQVIQLLSG (143 aa)) form the Clp R domain. 2 repeat regions span residues 5–70 (FTDR…IGQG) and 80–144 (FTPR…LLSG). The segment at 171–418 (LDQFGRNLTA…RMRIRRMTAP (248 aa)) is i. 216 to 223 (GEPGVGKT) contributes to the ATP binding site. A UVR domain is found at 425 to 460 (DEKIAEARREKESAIDAQDFEKAASLRDREKTLVAQ). Residues 479-670 (VDDEQIAEVL…VLIFTSNLGT (192 aa)) are II. Position 553–560 (553–560 (GPSGVGKT)) interacts with ATP. The disordered stretch occupies residues 821–848 (TGTRKPPAEPDLAKAGAHSAGGPEPAAR).

This sequence belongs to the ClpA/ClpB family. ClpC subfamily.

ATP-dependent specificity component of the Clp protease. It directs the protease to specific substrates. Can perform chaperone functions in the absence of ClpP. The protein is ATP-dependent Clp protease ATP-binding subunit ClpC1 (clpC1) of Mycobacterium tuberculosis (strain CDC 1551 / Oshkosh).